The following is a 627-amino-acid chain: Protein fem-1 homolog B (627 aa).

4 ANK repeats span residues 45 to 74, 87 to 116, 120 to 149, and 153 to 182; these read QRST…VQTQ, DGAT…NVNH, TNST…NISI, and YDNT…DPNA. Zn(2+) is bound by residues His-185, Cys-186, and His-218. 2 ANK repeats span residues 186 to 215 and 218 to 248; these read CGAT…AIVV and HGMT…DRRS. A TPR repeat occupies 344–377; it reads SHPIIYRGAVYADNMEFEQCIKLWLHALHLRQKG. 2 ANK repeats span residues 483-527 and 531-568; these read EGFT…EVNA and EGNS…HTDM.

The protein belongs to the fem-1 family. Component of a CRL2 E3 ubiquitin-protein ligase complex, also named ECS (Elongin BC-CUL2/5-SOCS-box protein) complex, composed of CUL2, Elongin BC (ELOB and ELOC), RBX1 and substrate-specific adapter FEM1B. Homooligomer. Interacts with PPM1F and PHTF1. Interacts with the death domain of FAS/TNFRSF6 and TNFRSF1A. Interacts with CHEK1. Interacts with NKX3-1. As to expression, widely expressed. Highly expressed in testis. Weakly expressed in other tissues.

Its subcellular location is the cytoplasm. The protein localises to the nucleus. The protein operates within protein modification; protein ubiquitination. With respect to regulation, activity of the CRL2(FEM1B) complex toward FNIP1 is inhibited by BEX family proteins (BEX1, BEX2, BEX3, BEX4 and/or BEX5) in absence of reductive stress. Mechanistically, BEX proteins act as pseudosubstrate inhibitors that associate with FEM1B via zinc in absence of reductive stress, thereby preventing association between FEM1B and FNIP1. Substrate-recognition component of a Cul2-RING (CRL2) E3 ubiquitin-protein ligase complex of the DesCEND (destruction via C-end degrons) pathway, which recognizes a C-degron located at the extreme C terminus of target proteins, leading to their ubiquitination and degradation. The C-degron recognized by the DesCEND pathway is usually a motif of less than ten residues and can be present in full-length proteins, truncated proteins or proteolytically cleaved forms. The CRL2(FEM1B) complex specifically recognizes proteins ending with -Gly-Leu-Asp-Arg, such as CDK5R1, leading to their ubiquitination and degradation. Also acts as a regulator of the reductive stress response by mediating ubiquitination of reduced FNIP1: in response to reductive stress, the CRL2(FEM1B) complex specifically recognizes a conserved Cys degron in FNIP1 when this degron is reduced, leading to FNIP1 degradation and subsequent activation of mitochondria to recalibrate reactive oxygen species (ROS). Mechanistically, recognizes and binds reduced FNIP1 through two interface zinc ions, which act as a molecular glue that recruit reduced FNIP1 to FEM1B. Promotes ubiquitination of GLI1, suppressing GLI1 transcriptional activator activity. Promotes ubiquitination and degradation of ANKRD37. Promotes ubiquitination and degradation of SLBP. Involved in apoptosis by acting as a death receptor-associated protein that mediates apoptosis. Also involved in glucose homeostasis in pancreatic islet. May also act as an adapter/mediator in replication stress-induced signaling that leads to the activation of CHEK1. The sequence is that of Protein fem-1 homolog B from Homo sapiens (Human).